Reading from the N-terminus, the 693-residue chain is Polyribonucleotide nucleotidyltransferase (693 aa).

The Mg(2+) site is built by Asp487 and Asp493. Residues 554-613 (PRIYTIKINPEKIKDVIGKGGSIIRMLTEETGTVIEIKDDGIVKISAINGEKAKYAIKRI) form the KH domain. The region spanning 623 to 691 (GKIYSGKVTR…RQGRIRLSMK (69 aa)) is the S1 motif domain.

This sequence belongs to the polyribonucleotide nucleotidyltransferase family. As to quaternary structure, component of the RNA degradosome, which is a multiprotein complex involved in RNA processing and mRNA degradation. Requires Mg(2+) as cofactor.

It is found in the cytoplasm. The catalysed reaction is RNA(n+1) + phosphate = RNA(n) + a ribonucleoside 5'-diphosphate. Functionally, involved in mRNA degradation. Catalyzes the phosphorolysis of single-stranded polyribonucleotides processively in the 3'- to 5'-direction. The chain is Polyribonucleotide nucleotidyltransferase from Buchnera aphidicola subsp. Cinara cedri (strain Cc).